The primary structure comprises 173 residues: DNA-directed RNA polymerase subunit delta (173 aa).

An HTH HARE-type domain is found at 14-81; the sequence is MALVEIAHEL…SDQTWGLRSW (68 aa). The tract at residues 110-173 is disordered; sequence LDLDEFEEID…DYDDEEEEIK (64 aa).

It belongs to the RpoE family. In terms of assembly, RNAP is composed of a core of 2 alpha, a beta and a beta' subunit. The core is associated with a delta subunit, and at least one of epsilon or omega. When a sigma factor is associated with the core the holoenzyme is formed, which can initiate transcription.

Participates in both the initiation and recycling phases of transcription. In the presence of the delta subunit, RNAP displays an increased specificity of transcription, a decreased affinity for nucleic acids, and an increased efficiency of RNA synthesis because of enhanced recycling. May function in sigma factor switching. It displaces RNA bound to RNA polymerase in a binary complex. The chain is DNA-directed RNA polymerase subunit delta from Bacillus subtilis (strain 168).